Reading from the N-terminus, the 268-residue chain is MHRIDETFRRLRAQSRKALIPFITAGDPSLEAAVPVMHALVRAGADVIELGVPFSDPMADGPVIQHSSERALQRGVGLAYVLQTVDVFRQSDAVTPVVLMGYLNPLEIYGIARFTQHAVACGVDGVLLVDLPPEEADEIRPIFSAAGLALIVLASPTTSASRLARLSGVAQGYLYYVSFSGVTGADRLDAQSAGDRLRGLRAQTQVPVVVGFGIRDAASAAVMAVDADGVVVGSALVTALSDAPDVDTACRRADAFLAPLRQALDAVK.

Residues E49 and D60 each act as proton acceptor in the active site.

This sequence belongs to the TrpA family. In terms of assembly, tetramer of two alpha and two beta chains.

The catalysed reaction is (1S,2R)-1-C-(indol-3-yl)glycerol 3-phosphate + L-serine = D-glyceraldehyde 3-phosphate + L-tryptophan + H2O. It functions in the pathway amino-acid biosynthesis; L-tryptophan biosynthesis; L-tryptophan from chorismate: step 5/5. Its function is as follows. The alpha subunit is responsible for the aldol cleavage of indoleglycerol phosphate to indole and glyceraldehyde 3-phosphate. The chain is Tryptophan synthase alpha chain from Xylella fastidiosa (strain 9a5c).